A 364-amino-acid polypeptide reads, in one-letter code: CCA-adding enzyme (364 aa).

Residues Gly-19 and Arg-22 each coordinate ATP. Gly-19 and Arg-22 together coordinate CTP. Residues Asp-32 and Asp-34 each contribute to the Mg(2+) site. Residues Arg-102, Arg-148, and Arg-151 each contribute to the ATP site. The CTP site is built by Arg-102, Arg-148, and Arg-151.

Belongs to the tRNA nucleotidyltransferase/poly(A) polymerase family. Bacterial CCA-adding enzyme type 2 subfamily. The cofactor is Mg(2+).

The enzyme catalyses a tRNA precursor + 2 CTP + ATP = a tRNA with a 3' CCA end + 3 diphosphate. It catalyses the reaction a tRNA with a 3' CCA end + 2 CTP + ATP = a tRNA with a 3' CCACCA end + 3 diphosphate. Its function is as follows. Catalyzes the addition and repair of the essential 3'-terminal CCA sequence in tRNAs without using a nucleic acid template. Adds these three nucleotides in the order of C, C, and A to the tRNA nucleotide-73, using CTP and ATP as substrates and producing inorganic pyrophosphate. tRNA 3'-terminal CCA addition is required both for tRNA processing and repair. Also involved in tRNA surveillance by mediating tandem CCA addition to generate a CCACCA at the 3' terminus of unstable tRNAs. While stable tRNAs receive only 3'-terminal CCA, unstable tRNAs are marked with CCACCA and rapidly degraded. The chain is CCA-adding enzyme from Bordetella pertussis (strain Tohama I / ATCC BAA-589 / NCTC 13251).